Here is a 545-residue protein sequence, read N- to C-terminus: Phenylalanine--tRNA ligase beta subunit (545 aa).

Residues 266–342 enclose the B5 domain; the sequence is LSPALRNINV…IGAGFGNLEA (77 aa). Residues D320, D326, E329, and D330 each coordinate Mg(2+).

This sequence belongs to the phenylalanyl-tRNA synthetase beta subunit family. Type 2 subfamily. As to quaternary structure, tetramer of two alpha and two beta subunits. Mg(2+) is required as a cofactor.

It is found in the cytoplasm. The enzyme catalyses tRNA(Phe) + L-phenylalanine + ATP = L-phenylalanyl-tRNA(Phe) + AMP + diphosphate + H(+). This Methanospirillum hungatei JF-1 (strain ATCC 27890 / DSM 864 / NBRC 100397 / JF-1) protein is Phenylalanine--tRNA ligase beta subunit.